A 299-amino-acid polypeptide reads, in one-letter code: Transcription termination/antitermination protein NusG (299 aa).

Positions 30–96 (DPDEAELADA…APVEPAEPVD (67 aa)) are disordered. 2 tandem repeats follow at residues 46–49 (EEAA) and 70–73 (EEAA). The segment at 46-87 (EEAALHVESDEDEDEADVEVDAAVEEAADDAEVAEEEAEEAA) is 4 X 4 AA repeats of E-E-A-A. Positions 54-87 (SDEDEDEADVEVDAAVEEAADDAEVAEEEAEEAA) are enriched in acidic residues. One copy of the 3; approximate repeat lies at 80-83 (EEEA). Repeat 4 spans residues 84–87 (EEAA). Residues 248–276 (VGDSVTVTDGPFATLQATINEINPDSKKV) enclose the KOW domain.

It belongs to the NusG family. Post-translationally, the N-terminus is blocked.

In terms of biological role, participates in transcription elongation, termination and antitermination. This chain is Transcription termination/antitermination protein NusG, found in Streptomyces virginiae (Streptomyces cinnamonensis).